The following is a 387-amino-acid chain: MLVQGTIICALVANAIASSIPSSFLLPEPSGPFKVQREILELTDWSRKDINSTLPRRLMVSRFNPIPEKHCIRTEDVPTFPPASAKLEDAILQAASGGHWVDGLLAASRIRVCADVKKGYQTDSHGDNHGIPILLFSPGGNTTRLVYSSIAQTISSAGYTVITMDHPHDTDIVEFLNGDIITGGEVTFSNPSVLPFWNDVRVQDTVFVLNQALKTSPHARIGMLGHSFGGSAVLSSMVKDGRISAGINFDGGLWGDAVNTGLGGRKKPQPYLQWGAYTHNRHNDTSWETLWKAMERLHPHAWKKELGIPAGRHNTFSDFPAIIDAGGVREVIGKASIDVLVGDIPAARSLEFIKVYVHDFFQFSLFGKDEGLLRGPSSKYPEVVFLD.

Residues 1 to 17 form the signal peptide; that stretch reads MLVQGTIICALVANAIA. Residues asparagine 51 and asparagine 141 are each glycosylated (N-linked (GlcNAc...) asparagine). Serine 227 (nucleophile) is an active-site residue. The active-site Charge relay system is the aspartate 250. A glycan (N-linked (GlcNAc...) asparagine) is linked at asparagine 283. Catalysis depends on histidine 313, which acts as the Charge relay system.

The protein belongs to the AB hydrolase superfamily. Lipase family.

The protein localises to the secreted. The enzyme catalyses a 1-O-alkyl-2-acetyl-sn-glycero-3-phosphocholine + H2O = a 1-O-alkyl-sn-glycero-3-phosphocholine + acetate + H(+). The sequence is that of Probable 1-alkyl-2-acetylglycerophosphocholine esterase from Arthroderma benhamiae (strain ATCC MYA-4681 / CBS 112371) (Trichophyton mentagrophytes).